An 800-amino-acid polypeptide reads, in one-letter code: DNA topoisomerase 4 subunit A (800 aa).

The Topo IIA-type catalytic domain maps to 31–495 (LPDVRDGLKP…EIEEIKIDKE (465 aa)). The active-site O-(5'-phospho-DNA)-tyrosine intermediate is Tyr119.

This sequence belongs to the type II topoisomerase GyrA/ParC subunit family. ParC type 2 subfamily. As to quaternary structure, heterotetramer composed of ParC and ParE.

Its subcellular location is the cell membrane. It catalyses the reaction ATP-dependent breakage, passage and rejoining of double-stranded DNA.. In terms of biological role, topoisomerase IV is essential for chromosome segregation. It relaxes supercoiled DNA. Performs the decatenation events required during the replication of a circular DNA molecule. The protein is DNA topoisomerase 4 subunit A of Staphylococcus aureus (strain MRSA252).